A 469-amino-acid polypeptide reads, in one-letter code: Properdin (469 aa).

The N-terminal stretch at 1-27 (MITEGAQAPRLLLPPLLLLLTLPATGS) is a signal peptide. TSP type-1 domains are found at residues 28–76 (DPVL…QPCR), 77–134 (SPRW…QCCP), 136–191 (MGGW…QVCP), 193–255 (HGAW…PPCP), 257–313 (AGGW…VPCP), 315–377 (DGEW…QHCP), and 379–462 (KGSW…PACK). Cystine bridges form between cysteine 32/cysteine 56, cysteine 43/cysteine 72, and cysteine 57/cysteine 75. 2 C-linked (Man) tryptophan glycosylation sites follow: tryptophan 83 and tryptophan 86. 7 disulfides stabilise this stretch: cysteine 89-cysteine 127, cysteine 93-cysteine 133, cysteine 104-cysteine 111, cysteine 132-cysteine 170, cysteine 148-cysteine 184, cysteine 152-cysteine 190, and cysteine 163-cysteine 174. The O-linked (Fuc...) threonine glycan is linked to threonine 92. Tryptophan 139, tryptophan 142, and tryptophan 145 each carry a C-linked (Man) tryptophan glycan. The O-linked (Fuc...) threonine glycan is linked to threonine 151. C-linked (Man) tryptophan glycosylation is found at tryptophan 196, tryptophan 199, and tryptophan 202. Intrachain disulfides connect cysteine 205–cysteine 248, cysteine 209–cysteine 254, and cysteine 224–cysteine 238. Serine 208 carries an O-linked (Fuc...) serine glycan. The tract at residues 219–238 (TRSRKCSAPEPSQKPPGKPC) is disordered. Tryptophan 260 and tryptophan 263 each carry a C-linked (Man) tryptophan glycan. Disulfide bonds link cysteine 269–cysteine 306, cysteine 273–cysteine 312, and cysteine 284–cysteine 296. Threonine 272 carries O-linked (Fuc...) threonine glycosylation. 2 C-linked (Man) tryptophan glycosylation sites follow: tryptophan 321 and tryptophan 324. 3 disulfides stabilise this stretch: cysteine 327-cysteine 370, cysteine 337-cysteine 376, and cysteine 350-cysteine 360. Positions 351-359 (RGRKFDGHR) are interaction with Complement C3 beta chain. 3 C-linked (Man) tryptophan glycosylation sites follow: tryptophan 382, tryptophan 385, and tryptophan 388. Cystine bridges form between cysteine 391/cysteine 455, cysteine 395/cysteine 461, and cysteine 407/cysteine 439. An N-linked (GlcNAc...) (complex) asparagine glycan is attached at asparagine 428.

As to quaternary structure, in plasma, properdin exists as dimers, trimers or tetramers in the relative proportions of 26:54:20. Interacts with the pro-C3-convertase enzyme complex (C3b-Bb) comprised of Complement C3 beta chain (C3b) and the Complement factor B Bb fragment (Bb), where it binds (via its TSP type-1 5 domain) with C3b and Bb. This interaction stabilizes the complex and allows it to become the active C3-convertase enzyme complex (C3b-Bb-FP). Interacts with C3b. Interacts with CFB.

It is found in the secreted. A positive regulator of the alternate pathway (AP) of complement. It binds to and stabilizes the C3- and C5-convertase enzyme complexes. Inhibits CFI-CFH mediated degradation of Complement C3 beta chain (C3b). The polypeptide is Properdin (Homo sapiens (Human)).